A 444-amino-acid chain; its full sequence is MGNSFTCISHEQEQRPKKSSGGGGNNSGKYKYVRRLSLMPSFRRRTLLPSLSCSGSSSTSSSKKGGIKAKTKKIRERHHHHHQDHEKDSHIIQEQTLAATNLLFNQTPRNSNSVVPPSFRRSTSVVYPSAQPSGTSSGPVSAVQTPKKSSAGFVRSSSSRQRSSTDPMIKPNQLVDKELNKVEGSETKRFVLVHGGGFGAWCWYKTITLLEKHGFQVDAVELTGSGVSSIDTNNITSLAHYSKPLLHFFESLKPTEKVILVGHDFGGACMSYAMEMFPTKIAKAVFISAAMLANGQSTLDLFNQQLGSNDLMQQAQIFLYANGKKNPPTAVDFDRSLLRDFLFNQSPPKDLALASVSIRPIPFAPVSEKVHVSEKNYGSIRRFYIKTMEDYAVPVLLQEAMIKLNPPEQVFQLKGSDHAPFFSRPQSLNKILVEISQIPFKKSS.

Disordered stretches follow at residues 1-32 (MGNS…KYKY), 49-90 (PSLS…KDSH), and 124-176 (SVVY…QLVD). A chloroplast-targeting transit peptide spans 1 to 60 (MGNSFTCISHEQEQRPKKSSGGGGNNSGKYKYVRRLSLMPSFRRRTLLPSLSCSGSSSTS). The span at 49–64 (PSLSCSGSSSTSSSKK) shows a compositional bias: low complexity. Residues 65-82 (GGIKAKTKKIRERHHHHH) show a composition bias toward basic residues. The segment covering 124–148 (SVVYPSAQPSGTSSGPVSAVQTPKK) has biased composition (polar residues). Residues 149 to 164 (SSAGFVRSSSSRQRSS) show a composition bias toward low complexity. Residues 190–310 (FVLVHGGGFG…LFNQQLGSND (121 aa)) form the AB hydrolase-1 domain. Catalysis depends on Asp-264, which acts as the Acyl-ester intermediate. Residues Asp-390 and His-418 each act as charge relay system in the active site.

It belongs to the AB hydrolase superfamily. Methylesterase family.

Its subcellular location is the plastid. It localises to the chloroplast. Putative methylesterase. This Arabidopsis thaliana (Mouse-ear cress) protein is Putative methylesterase 13, chloroplastic.